A 354-amino-acid chain; its full sequence is Decorin (354 aa).

A signal peptide spans 1 to 16 (MKATLVLFLLAQVSWA). Residues 17 to 30 (GPFEQRGLFDFMLE) constitute a propeptide that is removed on maturation. A glycan (O-linked (Xyl...) (glycosaminoglycan) serine) is linked at serine 34. 2 cysteine pairs are disulfide-bonded: cysteine 49/cysteine 55 and cysteine 53/cysteine 62. LRR repeat units lie at residues 68-88 (DKVP…NNKI), 89-112 (TEIK…NNKI), 113-136 (SKIS…KNHL), 137-157 (KELP…DNEI), 158-181 (TKLK…GNPL), 182-207 (KNSG…DTNI), 208-228 (TAIP…GNKI), 229-252 (AKVD…FNSI), 253-276 (TVVE…NNKL), 277-299 (LRVP…NNNI), 300-329 (SEVG…SNPV), and 330-354 (RYWQ…GNYK). Residue asparagine 206 is glycosylated (N-linked (GlcNAc...) asparagine). N-linked (GlcNAc...) asparagine glycans are attached at residues asparagine 241, asparagine 257, and asparagine 298. Cysteines 308 and 341 form a disulfide.

It belongs to the small leucine-rich proteoglycan (SLRP) family. SLRP class I subfamily. In terms of assembly, binds to type I and type II collagen, fibronectin and TGF-beta. Forms a ternary complex with MFAP2 and ELN. Interacts with DPT. The attached glycosaminoglycan chain can be either chondroitin sulfate or dermatan sulfate depending upon the tissue of origin.

It is found in the secreted. The protein resides in the extracellular space. It localises to the extracellular matrix. May affect the rate of fibrils formation. May be implicated in the dilatation of the rat cervix. This Rattus norvegicus (Rat) protein is Decorin (Dcn).